The chain runs to 812 residues: Probable inorganic carbon transporter subunit DabA (812 aa).

Cys337, Asp339, His499, and Cys514 together coordinate Zn(2+).

The protein belongs to the inorganic carbon transporter (TC 9.A.2) DabA family. As to quaternary structure, forms a complex with DabB. Zn(2+) is required as a cofactor.

It is found in the cell inner membrane. Part of an energy-coupled inorganic carbon pump. In Xanthomonas oryzae pv. oryzae (strain KACC10331 / KXO85), this protein is Probable inorganic carbon transporter subunit DabA.